Here is a 2126-residue protein sequence, read N- to C-terminus: Polycystin family receptor for egg jelly (2126 aa).

Residues 1-18 form the signal peptide; it reads MWPGPALLLLGLGLGLGS. Topologically, residues 19–1068 are extracellular; the sequence is QPPPTGPRGL…AIISNLTQNP (1050 aa). Residues 20–71 are disordered; it reads PPPTGPRGLPGVLRGAPGLGQGAESSVRGGDTGGLSPRAAPRHASPTPPRRC. N-linked (GlcNAc...) asparagine glycans are attached at residues asparagine 84, asparagine 94, asparagine 129, asparagine 192, asparagine 243, asparagine 325, asparagine 571, asparagine 761, asparagine 774, asparagine 807, asparagine 849, asparagine 888, asparagine 960, and asparagine 1063. The 696-residue stretch at 102-797 folds into the REJ domain; the sequence is CIMQPVKINR…SMMFCEFADD (696 aa). Residues 1069–1089 form a helical membrane-spanning segment; the sequence is ATFLAVLFIMILYAILAFWAL. Topologically, residues 1090–1273 are cytoplasmic; it reads HRDVIDLYFR…VPKPFNRLQR (184 aa). The 118-residue stretch at 1114-1231 folds into the PLAT domain; the sequence is LCYLVTIFTG…TLDATFSVTN (118 aa). A helical membrane pass occupies residues 1274 to 1294; it reads LSCCLAMLLSSLVCNIMFFNL. Over 1295–1311 the chain is Extracellular; the sequence is NQKEKIESRHMHIIRSM. Residues 1312 to 1332 traverse the membrane as a helical segment; the sequence is LIGIESVVITIPVQLLITFFF. The Cytoplasmic segment spans residues 1333 to 1449; it reads TYSQKNLKMN…KTQIILPRWC (117 aa). Residues 1379 to 1431 form a disordered region; it reads RAAVSTSAPEEKEAFETSQKHEKADTQMSNKNSSNNNQEASEGVPPKAFSSQP. A compositionally biased stretch (basic and acidic residues) spans 1387–1403; it reads PEEKEAFETSQKHEKAD. Residues 1450 to 1470 form a helical membrane-spanning segment; the sequence is VYIAWFLVFATSGISSFFIVF. Residues 1471 to 1483 lie on the Extracellular side of the membrane; that stretch reads YGVTYGYAKSIEW. A helical transmembrane segment spans residues 1484–1504; it reads LFASFCSFCQSVFLVQPCNIL. Residues 1505–1580 are Cytoplasmic-facing; sequence LRSGTRSYKP…RRENRIRRRS (76 aa). Residues 1581-1601 traverse the membrane as a helical segment; the sequence is FLFLSYLVTHFIFLTLLLLLI. Topologically, residues 1602-1838 are extracellular; it reads FSLRHNDSFY…DFNRKTSSEI (237 aa). 4 N-linked (GlcNAc...) asparagine glycosylation sites follow: asparagine 1607, asparagine 1676, asparagine 1766, and asparagine 1817. The helical transmembrane segment at 1839-1859 threads the bilayer; that stretch reads YLYAAILIFFCAYVVDEGYII. Topologically, residues 1860–1875 are cytoplasmic; it reads RQERASYIRSVYNLLN. A helical transmembrane segment spans residues 1876–1896; sequence FSLKCMFALLIVLFFWKYFLA. The Extracellular segment spans residues 1897-1918; the sequence is TKMVQLYLADPEAFIPFHAVSR. A helical transmembrane segment spans residues 1919–1939; sequence VDHFMRIILAFLLFLTILKTL. Over 1940-1964 the chain is Cytoplasmic; sequence RYSRFFYNVRLAQKAIQAALPGICH. Residues 1965-1985 form a helical membrane-spanning segment; the sequence is TALVVSIYSFMYVAFGYLVFG. Over 1986-2019 the chain is Extracellular; it reads QHEWNYSNMIHATQTIFSYCVSAFQNTEFSGNKV. A helical transmembrane segment spans residues 2020 to 2040; the sequence is LGVLFLSSFMLVMICIFINLF. Residues 2041–2126 are Cytoplasmic-facing; sequence QAVILSAYDE…NGKKMIYLVV (86 aa).

Belongs to the polycystin family. As to expression, exclusively expressed in testis.

It is found in the cell membrane. It localises to the cytoplasmic vesicle. The protein localises to the secretory vesicle. Its subcellular location is the acrosome membrane. The protein resides in the nucleus. Functionally, testis-specific protein that controls sperm transport and the timing of zona pellucida-evoked exocytosis of the sperm acrosome. This is Polycystin family receptor for egg jelly (Pkdrej) from Mus musculus (Mouse).